Here is a 312-residue protein sequence, read N- to C-terminus: Ribonuclease HIII (312 aa).

The RNase H type-2 domain maps to 95–311; it reads FNCIGSDEAG…REKAQKILKP (217 aa). Asp101, Glu102, and Asp206 together coordinate a divalent metal cation.

This sequence belongs to the RNase HII family. RnhC subfamily. The cofactor is Mn(2+). Mg(2+) is required as a cofactor.

Its subcellular location is the cytoplasm. The catalysed reaction is Endonucleolytic cleavage to 5'-phosphomonoester.. Its function is as follows. Endonuclease that specifically degrades the RNA of RNA-DNA hybrids. This is Ribonuclease HIII from Staphylococcus aureus (strain MW2).